The sequence spans 632 residues: Chaperone protein HtpG (632 aa).

The interval 1 to 339 (MTQQTMSFQA…SSDLPLNVSR (339 aa)) is a; substrate-binding. Residues 340 to 559 (EILQESRDVK…DNDMSGYLQR (220 aa)) are b. Residues 560 to 632 (MLKAAGQSAP…TNALLLSRAA (73 aa)) form a c region.

This sequence belongs to the heat shock protein 90 family. In terms of assembly, homodimer.

The protein resides in the cytoplasm. Its function is as follows. Molecular chaperone. Has ATPase activity. This chain is Chaperone protein HtpG, found in Burkholderia pseudomallei (strain 1106a).